A 217-amino-acid chain; its full sequence is Somatotropin (217 aa).

The first 26 residues, 1–26 (MATGSRTSLLLAFTLLCLPQLKEAGA), serve as a signal peptide directing secretion. Residue His-44 participates in Zn(2+) binding. Cys-79 and Cys-191 are joined by a disulfide. Ser-132 is modified (phosphoserine). Glu-200 contributes to the Zn(2+) binding site. An intrachain disulfide couples Cys-208 to Cys-215.

It belongs to the somatotropin/prolactin family.

The protein resides in the secreted. Plays an important role in growth control. Its major role in stimulating body growth is to stimulate the liver and other tissues to secrete IGF1. It stimulates both the differentiation and proliferation of myoblasts. It also stimulates amino acid uptake and protein synthesis in muscle and other tissues. In Saimiri boliviensis boliviensis (Bolivian squirrel monkey), this protein is Somatotropin (GH1).